The sequence spans 402 residues: Palmitoyltransferase PFA4 (402 aa).

Residues 1 to 8 (MAVQLKWP) lie on the Cytoplasmic side of the membrane. Residues 9–29 (IIGVVIPCVLIAMVAYGSHYF) traverse the membrane as a helical segment. At 30–39 (VFRTNLSRTE) the chain is on the lumenal side. The helical transmembrane segment at 40–60 (QILYEVYVCIVWLSYYLAIVV) threads the bilayer. Residues 61–125 (DPGSPPKNFT…GHNNLPHFLR (65 aa)) are Cytoplasmic-facing. One can recognise a DHHC domain in the interval 78–128 (RWCKKCQNYKPERSHHCKTCNKCVLKMDHHCPWTYNCVGHNNLPHFLRFVF). Catalysis depends on Cys-108, which acts as the S-palmitoyl cysteine intermediate. The helical transmembrane segment at 126 to 146 (FVFFLIVGMTYVLFQLGKQVL) threads the bilayer. Over 147–165 (HYYDSSKLPSYLIDKKEMC) the chain is Lumenal. Residues 166-186 (AVIFLLPVTFFVFVSIIILFV) traverse the membrane as a helical segment. Residues 187–402 (RCMINLLFRG…LVSKDEISNN (216 aa)) lie on the Cytoplasmic side of the membrane.

It belongs to the DHHC palmitoyltransferase family. PFA4 subfamily.

The protein resides in the endoplasmic reticulum membrane. It catalyses the reaction L-cysteinyl-[protein] + hexadecanoyl-CoA = S-hexadecanoyl-L-cysteinyl-[protein] + CoA. Mediates the reversible addition of palmitate to target proteins, thereby regulating their membrane association and biological function. In Debaryomyces hansenii (strain ATCC 36239 / CBS 767 / BCRC 21394 / JCM 1990 / NBRC 0083 / IGC 2968) (Yeast), this protein is Palmitoyltransferase PFA4.